The following is a 195-amino-acid chain: Transcriptional regulator LdrP (195 aa).

An HTH crp-type domain is found at 110–182; that stretch reads GELRARIARY…YRRVYLLDLA (73 aa). A DNA-binding region (H-T-H motif) is located at residues 142-161; that stretch reads HEEIADATASIRESVSKVLA.

Its function is as follows. Activates transcription. Positively regulates PcrtB promoter upstream of the crtB operon in a cAMP-independent manner. Regulated genes include genes encoding DNA photolyase, phytoene synthase and cytochrome P450 monooxygenase, which are involved in carotenoid biosynthesis. Positively regulates the light-inducible gene cluster in the megaplasmid in a cAMP-independent manner. This Thermus thermophilus (strain ATCC BAA-163 / DSM 7039 / HB27) protein is Transcriptional regulator LdrP.